A 431-amino-acid polypeptide reads, in one-letter code: Levansucrase LscB (431 aa).

W61, D62, A148, R218, and D219 together coordinate sucrose. The active-site Nucleophile is the D62. The active-site Proton donor/acceptor is E303.

Belongs to the glycosyl hydrolase 68 family.

The protein localises to the secreted. The enzyme catalyses [6)-beta-D-fructofuranosyl-(2-&gt;](n) alpha-D-glucopyranoside + sucrose = [6)-beta-D-fructofuranosyl-(2-&gt;](n+1) alpha-D-glucopyranoside + D-glucose. Catalyzes the synthesis of levan, a fructose polymer, by transferring the fructosyl moiety from sucrose to a growing acceptor molecule. This Pseudomonas savastanoi pv. glycinea (Pseudomonas syringae pv. glycinea) protein is Levansucrase LscB.